Reading from the N-terminus, the 254-residue chain is Flagellar L-ring protein 1 (254 aa).

The signal sequence occupies residues methionine 1–alanine 26.

It belongs to the FlgH family. In terms of assembly, the basal body constitutes a major portion of the flagellar organelle and consists of four rings (L,P,S, and M) mounted on a central rod.

The protein resides in the cell outer membrane. It localises to the bacterial flagellum basal body. Functionally, assembles around the rod to form the L-ring and probably protects the motor/basal body from shearing forces during rotation. The sequence is that of Flagellar L-ring protein 1 (flgH1) from Bradyrhizobium diazoefficiens (strain JCM 10833 / BCRC 13528 / IAM 13628 / NBRC 14792 / USDA 110).